We begin with the raw amino-acid sequence, 816 residues long: Leucine--tRNA ligase (816 aa).

A 'HIGH' region motif is present at residues proline 46–histidine 56. The short motif at lysine 638–serine 642 is the 'KMSKS' region element. Position 641 (lysine 641) interacts with ATP.

The protein belongs to the class-I aminoacyl-tRNA synthetase family.

The protein resides in the cytoplasm. It carries out the reaction tRNA(Leu) + L-leucine + ATP = L-leucyl-tRNA(Leu) + AMP + diphosphate. The chain is Leucine--tRNA ligase from Xanthomonas campestris pv. campestris (strain ATCC 33913 / DSM 3586 / NCPPB 528 / LMG 568 / P 25).